The following is a 148-amino-acid chain: Transcriptional regulator MraZ (148 aa).

2 SpoVT-AbrB domains span residues 5–51 and 80–123; these read VATV…PLPE and AHDI…NEAR.

This sequence belongs to the MraZ family. In terms of assembly, forms oligomers.

It is found in the cytoplasm. Its subcellular location is the nucleoid. This Thiobacillus denitrificans (strain ATCC 25259 / T1) protein is Transcriptional regulator MraZ.